The sequence spans 2121 residues: PAM2 domain-containing protein UPA2 (2121 aa).

The short motif at 1 to 17 (MEGSSLNVAAPVFKPSG) is the PAM2 1 element. Disordered regions lie at residues 14 to 46 (KPSG…AVHA), 262 to 302 (QPED…SALT), 375 to 397 (AATT…PPST), 475 to 507 (ARRR…SSGG), 522 to 543 (ANSD…QKPL), and 586 to 819 (DLGR…QFSR). Residues 339 to 599 (PWPYSLGLPD…GFGYEPQSPN (261 aa)) are effector domain. Over residues 596–607 (QSPNAAPNGTTS) the composition is skewed to polar residues. 2 stretches are compositionally biased toward acidic residues: residues 626 to 637 (EENDELGFDGEE) and 646 to 658 (EDAD…EEPN). The segment covering 679-689 (DGHDRYADDNQ) has biased composition (basic and acidic residues). Polar residues predominate over residues 690–712 (SHASNDDSLQDSLTPSDEQFSNP). Over residues 719-735 (REERILRRQHRAAERAA) the composition is skewed to basic and acidic residues. Over residues 736 to 745 (RRERKQRQRG) the composition is skewed to basic residues. Polar residues-rich tracts occupy residues 749-758 (SDNTLPSSSI) and 777-788 (NPRNGNTISNPS). 2 consecutive short sequence motifs (PAM2) follow at residues 858–874 (SGIS…KFGG) and 920–937 (TNAA…PGLF). Residues 950–960 (NSLSASPSIAV) are compositionally biased toward polar residues. The tract at residues 950-1012 (NSLSASPSIA…PSPPRPKASA (63 aa)) is disordered. The segment covering 966–981 (GADHRETENRDMQGRE) has biased composition (basic and acidic residues). The PAM2 4 signature appears at 1046–1063 (SHESRLTADAPSFVPTWA). Disordered stretches follow at residues 1076–1096 (KRPS…KDLP), 1119–1261 (SKDD…EEES), and 1337–1369 (SHAR…NSSL). Residues 1198 to 1207 (HSPSISQTSD) are compositionally biased toward polar residues. Positions 1248–1261 (GGNDEDDYEDEEES) are enriched in acidic residues. Over residues 1345–1369 (ETQSTIRPLRQRNSSSDVKTANSSL) the composition is skewed to polar residues. Residues 1783–2054 (LEKQAQANAD…EAKLQTLTAS (272 aa)) adopt a coiled-coil conformation. The segment at 2099–2121 (SFASTAGSQGKKEVEVDEGGWWS) is disordered. The short motif at 2118 to 2120 (GWW) is the GWW element.

It belongs to the UPA1 PAM2 domain-binding protein family. In terms of assembly, might form homodimers via its C-terminal coiled-coil domain. Part of large ribonucleoprotein complexes (mRNPs) containing RNA-binding proteins RRM4 and PAB1, endosome-binding protein UPA1, core scaffold protein UPA2 and associated factor GRP1. Interacts (via PAM2 motifs) with PAB1.

The protein localises to the cytoplasm. It is found in the cytoskeleton. It localises to the endosome. Core component of endosomal mRNA transport and appears to carry out crucial scaffolding functions. The endosomal mRNA transport regulates polarity of the infectious hyphae by transporting a broad spectrum of cargo mRNAs from the nucleus to cell poles. The protein is PAM2 domain-containing protein UPA2 of Mycosarcoma maydis (Corn smut fungus).